Reading from the N-terminus, the 319-residue chain is Olfactory receptor 56B4 (319 aa).

The Extracellular portion of the chain corresponds to 1–31 (MDTSTSVTYDSSLQISQFILMGLPGIHEWQH). Residues 32–52 (WLSLPLTLLYLLALGANLLII) form a helical membrane-spanning segment. Residues 53–60 (ITIQHETV) lie on the Cytoplasmic side of the membrane. The chain crosses the membrane as a helical span at residues 61–81 (LHEPMYHLLGILAVVDIGLAT). At 82 to 105 (TIMPKILAIFWFDAKAISLPMCFA) the chain is on the extracellular side. A disulfide bond links Cys103 and Cys195. Residues 106–126 (QIYAIHCFFCIESGIFLCMAV) form a helical membrane-spanning segment. At 127-145 (DRYIAICRPLQYPSIVTKA) the chain is on the cytoplasmic side. Residues 146 to 166 (FVFKATGFIMLRNGLLTIPVP) traverse the membrane as a helical segment. Residues 167–202 (ILAAQRHYCSRNEIEHCLCSNLGVISLACDDITVNK) lie on the Extracellular side of the membrane. The helical transmembrane segment at 203–223 (FYQLMLAWVLVGSDMALVFSS) threads the bilayer. Over 224–243 (YAVILHSVLRLNSAEAMSKA) the chain is Cytoplasmic. Residues 244–263 (LSTCSSHLILILFHTGIIVL) form a helical membrane-spanning segment. Residues 264–277 (SVTHLAEKKIPLIP) are Extracellular-facing. The helical transmembrane segment at 278 to 298 (VFLNVLHNVIPPALNPLACAL) threads the bilayer. At 299 to 319 (RMHKLRLGFQRLLGLGQDVSK) the chain is on the cytoplasmic side.

This sequence belongs to the G-protein coupled receptor 1 family.

The protein localises to the cell membrane. Its function is as follows. Odorant receptor. The sequence is that of Olfactory receptor 56B4 (OR56B4) from Homo sapiens (Human).